We begin with the raw amino-acid sequence, 411 residues long: Putative ion-transport protein YfeO (411 aa).

Transmembrane regions (helical) follow at residues 9 to 29 (MLLL…VLIA), 54 to 74 (DSPF…GLII), 99 to 119 (ALPG…SLGP), 149 to 169 (ILAS…AALI), 186 to 206 (LFAP…FFHP), 223 to 243 (IASG…AVWC), 258 to 278 (VLIL…GGPL), 296 to 316 (LGAG…VIAA), 322 to 342 (GGRI…LHAH), 343 to 363 (VEAV…VLVV), and 386 to 406 (LLCI…LLAA).

It belongs to the chloride channel (TC 2.A.49) family.

The protein resides in the cell membrane. In Salmonella agona (strain SL483), this protein is Putative ion-transport protein YfeO.